A 106-amino-acid chain; its full sequence is Pyrimidine/purine nucleoside phosphorylase (106 aa).

The protein belongs to the nucleoside phosphorylase PpnP family.

It catalyses the reaction a purine D-ribonucleoside + phosphate = a purine nucleobase + alpha-D-ribose 1-phosphate. The enzyme catalyses adenosine + phosphate = alpha-D-ribose 1-phosphate + adenine. It carries out the reaction cytidine + phosphate = cytosine + alpha-D-ribose 1-phosphate. The catalysed reaction is guanosine + phosphate = alpha-D-ribose 1-phosphate + guanine. It catalyses the reaction inosine + phosphate = alpha-D-ribose 1-phosphate + hypoxanthine. The enzyme catalyses thymidine + phosphate = 2-deoxy-alpha-D-ribose 1-phosphate + thymine. It carries out the reaction uridine + phosphate = alpha-D-ribose 1-phosphate + uracil. The catalysed reaction is xanthosine + phosphate = alpha-D-ribose 1-phosphate + xanthine. In terms of biological role, catalyzes the phosphorolysis of diverse nucleosides, yielding D-ribose 1-phosphate and the respective free bases. Can use uridine, adenosine, guanosine, cytidine, thymidine, inosine and xanthosine as substrates. Also catalyzes the reverse reactions. This Burkholderia ambifaria (strain ATCC BAA-244 / DSM 16087 / CCUG 44356 / LMG 19182 / AMMD) (Burkholderia cepacia (strain AMMD)) protein is Pyrimidine/purine nucleoside phosphorylase.